The sequence spans 138 residues: Thyrotropin subunit beta (138 aa).

The signal sequence occupies residues 1-20; that stretch reads MTALFLMSMLFGLTCGQAMS. Cystine bridges form between cysteine 22-cysteine 72, cysteine 36-cysteine 87, cysteine 39-cysteine 125, cysteine 47-cysteine 103, cysteine 51-cysteine 105, and cysteine 108-cysteine 115. An N-linked (GlcNAc...) asparagine glycan is attached at asparagine 43. Residues 133 to 138 constitute a propeptide that is removed on maturation; the sequence is LVGFSV.

The protein belongs to the glycoprotein hormones subunit beta family. As to quaternary structure, heterodimer of a common alpha chain and a unique beta chain which confers biological specificity to thyrotropin, lutropin, follitropin and gonadotropin.

The protein resides in the secreted. Functionally, indispensable for the control of thyroid structure and metabolism. The polypeptide is Thyrotropin subunit beta (TSHB) (Homo sapiens (Human)).